The following is a 629-amino-acid chain: LEAF RUST 10 DISEASE-RESISTANCE LOCUS RECEPTOR-LIKE PROTEIN KINASE-like 1.1 (629 aa).

An N-terminal signal peptide occupies residues 1-19 (METVSVLLFFFLFLLAAEA). Topologically, residues 20 to 225 (RSTKRTGCKD…PNNYHAEMRL (206 aa)) are extracellular. Asn-56, Asn-92, Asn-123, Asn-124, Asn-172, and Asn-177 each carry an N-linked (GlcNAc...) asparagine glycan. The chain crosses the membrane as a helical span at residues 226 to 246 (GLGIGGSVILIIILVALFAVI). Over 247–629 (HRNYRRKDGS…TTPNTSAYEF (383 aa)) the chain is Cytoplasmic. Residues 291–565 (FSKDRLLGDG…TMEQVVHELK (275 aa)) form the Protein kinase domain. Residues 297 to 305 (LGDGGFGTV) and Lys-319 each bind ATP. Tyr-365 is modified (phosphotyrosine). Residue Asp-416 is the Proton acceptor of the active site. Ser-449 is subject to Phosphoserine. Thr-450 and Thr-455 each carry phosphothreonine. A Phosphotyrosine modification is found at Tyr-463. Residues 609 to 629 (VSVTDQWTSKSTTPNTSAYEF) form a disordered region.

This sequence belongs to the protein kinase superfamily. Ser/Thr protein kinase family.

Its subcellular location is the cell membrane. The catalysed reaction is L-seryl-[protein] + ATP = O-phospho-L-seryl-[protein] + ADP + H(+). It catalyses the reaction L-threonyl-[protein] + ATP = O-phospho-L-threonyl-[protein] + ADP + H(+). In Arabidopsis thaliana (Mouse-ear cress), this protein is LEAF RUST 10 DISEASE-RESISTANCE LOCUS RECEPTOR-LIKE PROTEIN KINASE-like 1.1.